A 365-amino-acid chain; its full sequence is Cobalt-precorrin-5B C(1)-methyltransferase (365 aa).

The protein belongs to the CbiD family.

The catalysed reaction is Co-precorrin-5B + S-adenosyl-L-methionine = Co-precorrin-6A + S-adenosyl-L-homocysteine. The protein operates within cofactor biosynthesis; adenosylcobalamin biosynthesis; cob(II)yrinate a,c-diamide from sirohydrochlorin (anaerobic route): step 6/10. Its function is as follows. Catalyzes the methylation of C-1 in cobalt-precorrin-5B to form cobalt-precorrin-6A. This is Cobalt-precorrin-5B C(1)-methyltransferase from Methanococcus maripaludis (strain DSM 14266 / JCM 13030 / NBRC 101832 / S2 / LL).